The following is a 199-amino-acid chain: Phosphoheptose isomerase (199 aa).

The SIS domain maps to 36–198 (MAQCLLNEHK…DRKLIPSSED (163 aa)). Substrate is bound at residue 51–53 (NGG). Zn(2+)-binding residues include His-60 and Glu-64. Substrate-binding positions include Glu-64, 93-94 (ND), 119-121 (STS), Ser-124, and Gln-174. Residues Gln-174 and His-182 each contribute to the Zn(2+) site.

Belongs to the SIS family. GmhA subfamily. In terms of assembly, homotetramer. Zn(2+) is required as a cofactor.

The protein localises to the cytoplasm. The catalysed reaction is 2 D-sedoheptulose 7-phosphate = D-glycero-alpha-D-manno-heptose 7-phosphate + D-glycero-beta-D-manno-heptose 7-phosphate. The protein operates within carbohydrate biosynthesis; D-glycero-D-manno-heptose 7-phosphate biosynthesis; D-glycero-alpha-D-manno-heptose 7-phosphate and D-glycero-beta-D-manno-heptose 7-phosphate from sedoheptulose 7-phosphate: step 1/1. In terms of biological role, catalyzes the isomerization of sedoheptulose 7-phosphate in D-glycero-D-manno-heptose 7-phosphate. This chain is Phosphoheptose isomerase, found in Coxiella burnetii (strain CbuK_Q154) (Coxiella burnetii (strain Q154)).